Reading from the N-terminus, the 437-residue chain is Trigger factor (437 aa).

Residues 163-248 enclose the PPIase FKBP-type domain; the sequence is GHMVTIDYAF…LNEIKRKELP (86 aa).

Belongs to the FKBP-type PPIase family. Tig subfamily.

The protein resides in the cytoplasm. The catalysed reaction is [protein]-peptidylproline (omega=180) = [protein]-peptidylproline (omega=0). Functionally, involved in protein export. Acts as a chaperone by maintaining the newly synthesized protein in an open conformation. Functions as a peptidyl-prolyl cis-trans isomerase. The sequence is that of Trigger factor from Pelobacter propionicus (strain DSM 2379 / NBRC 103807 / OttBd1).